The following is a 466-amino-acid chain: Glutamate--tRNA ligase 1 (466 aa).

The 'HIGH' region signature appears at 9 to 19 (PSPTGYLHIGG). Residues Cys98, Cys100, Cys125, and Glu127 each coordinate Zn(2+). A 'KMSKS' region motif is present at residues 236–240 (KLSKR). Residue Lys239 participates in ATP binding.

Belongs to the class-I aminoacyl-tRNA synthetase family. Glutamate--tRNA ligase type 1 subfamily. Monomer. Requires Zn(2+) as cofactor.

It is found in the cytoplasm. The enzyme catalyses tRNA(Glu) + L-glutamate + ATP = L-glutamyl-tRNA(Glu) + AMP + diphosphate. Functionally, catalyzes the attachment of glutamate to tRNA(Glu) in a two-step reaction: glutamate is first activated by ATP to form Glu-AMP and then transferred to the acceptor end of tRNA(Glu). The polypeptide is Glutamate--tRNA ligase 1 (Acidithiobacillus ferrooxidans (strain ATCC 53993 / BNL-5-31) (Leptospirillum ferrooxidans (ATCC 53993))).